We begin with the raw amino-acid sequence, 382 residues long: Mannitol-1-phosphate 5-dehydrogenase (382 aa).

NAD(+) is bound at residue 3 to 14 (AVHFGAGNIGRG).

It belongs to the mannitol dehydrogenase family.

It carries out the reaction D-mannitol 1-phosphate + NAD(+) = beta-D-fructose 6-phosphate + NADH + H(+). The polypeptide is Mannitol-1-phosphate 5-dehydrogenase (Aliivibrio salmonicida (strain LFI1238) (Vibrio salmonicida (strain LFI1238))).